The primary structure comprises 587 residues: Calcium/calmodulin-dependent protein kinase kinase 2 (587 aa).

Positions 1–11 (MSSCVSSQPTS) are enriched in polar residues. 2 disordered regions span residues 1 to 32 (MSSC…SQKP) and 74 to 115 (EADG…SSLD). N-acetylserine is present on Ser-2. Ser-99, Ser-113, Ser-128, Ser-132, and Ser-136 each carry phosphoserine. Residues 101–115 (QERSQGGPASSSSLD) are compositionally biased toward polar residues. Residues 164-445 (YTLKDEIGKG…VPEIKLHPWV (282 aa)) enclose the Protein kinase domain. Residues 170–178 (IGKGSYGVV) and Lys-193 each bind ATP. The tract at residues 203–225 (QAGFPRRPPPRGTRPAPGGCIQP) is RP domain. The interval 204–224 (AGFPRRPPPRGTRPAPGGCIQ) is disordered. The Proton acceptor role is filled by Asp-311. An autoinhibitory domain region spans residues 471–476 (ENSVKH). The interval 474–499 (VKHIPSLATVILVKTMIRKRSFGNPF) is calmodulin-binding. A phosphoserine mark is found at Ser-494 and Ser-510. A disordered region spans residues 496 to 587 (GNPFEGSRRE…QQPEEAMEPE (92 aa)). The segment covering 520-535 (PTREWEPLSEPKEARQ) has biased composition (basic and acidic residues). Over residues 569 to 579 (PGSPPRTPPQQ) the composition is skewed to pro residues. Position 571 is a phosphoserine (Ser-571).

This sequence belongs to the protein kinase superfamily. Ser/Thr protein kinase family. As to quaternary structure, interacts with calmodulin. In terms of processing, phosphorylated by PKA. Each isoform may show a different pattern of phosphorylation. Autophosphorylated. In terms of tissue distribution, mainly expressed in brain, but detected in all tissues tested (at protein level). In the brain, isoform 1 may be predominant. with high levels in the cerebellum and hippocampus, although isoform 3 is detectable. Isoform 3 is also expressed in lung.

The protein localises to the nucleus. Its subcellular location is the cytoplasm. The protein resides in the cell projection. It is found in the neuron projection. The enzyme catalyses L-seryl-[protein] + ATP = O-phospho-L-seryl-[protein] + ADP + H(+). The catalysed reaction is L-threonyl-[protein] + ATP = O-phospho-L-threonyl-[protein] + ADP + H(+). Activated by Ca(2+)/calmodulin. Binding of calmodulin may relieve intrasteric autoinhibition. Autophosphorylation does not alter activity or regulation by Ca(2+)/calmodulin. In part, activity is independent on Ca(2+)/calmodulin. In terms of biological role, calcium/calmodulin-dependent protein kinase belonging to a proposed calcium-triggered signaling cascade involved in a number of cellular processes. Phosphorylates CAMK1 and CAMK4. Phosphorylates CAMK1D. Seems to be involved in hippocampal activation of CREB1. Efficiently phosphorylates 5'-AMP-activated protein kinase (AMPK) trimer, including that consisting of PRKAA1, PRKAB1 and PRKAG1. This phosphorylation is stimulated in response to Ca(2+) signals. May play a role in neurite growth. Isoform 2 may promote neurite elongation, while isoform 1 may promoter neurite branching. The sequence is that of Calcium/calmodulin-dependent protein kinase kinase 2 (Camkk2) from Rattus norvegicus (Rat).